A 737-amino-acid polypeptide reads, in one-letter code: MPEATEHPPIGEAQTEPAQSGCPMVIKPPVEGGSNRDWWPNAVNLKMLQKDPEVIDPMDEGYDYREAVQTLDVDQLARDFDELCTNSQDWWPADFGHYGPLFIRMSWHAAGTYRVQDGRGGAGKGMQRFAPLNSWPDNVSLDKARRLLWPLKKKYGKKLSWSDLIVYAGNRAMENMGFKTAGFAFGRPDYWEPEEDVYWGAEHEWLGSQDRYAGANGDRTKLENPLGASHMGLIYVNPEGPEGNPDPIAAAIDIRETFGRMAMNDVETAALIVGGHTFGKTHGATDIVNGPEPEAAPLEQMGLGWSNPGVGIDTVSSGLEVTWTHTPTKWDNSFLEILYGNEWELFKSPAGANQWRPKDNGWANSVPMAQGTGKTHPAMLTTDLSMRMDPIYGEITRRWLDHPEELAEEYAKAWFKLLHRDMGPVQRYLGPLVPTQTWLWQDIVPAGKPLSDADVATLKGAIADSGLTVQQLVSTAWKAASSFRISDMRGGANGGRIRLQPQLGWESNEPDELAQVISKLEEIQGSSGIDVSFADLVVLGGNVGIETAAKAAGFDIEVPFSSGRGDATQEQTDVEAFSYLEPKADGFRNYVGKGLNLPAEYQLIDQANLLNLSAPQMTVLIGGLRALGITHGDSKLGVLTDTPGQLTNDYFVNLTDMGVKWAPAPADDGTYVGTDRDTGEVKYTASRVDLLFGSNSQLRALAEVYAEDDSRDKFVKDFVAAWVNVMDADRYDIGKGA.

A disordered region spans residues 1–33 (MPEATEHPPIGEAQTEPAQSGCPMVIKPPVEGG). A cross-link (tryptophyl-tyrosyl-methioninium (Trp-Tyr) (with M-261)) is located at residues 107–235 (WHAAGTYRVQ…LGASHMGLIY (129 aa)). Residue H108 is the Proton acceptor of the active site. A cross-link (tryptophyl-tyrosyl-methioninium (Tyr-Met) (with W-107)) is located at residues 235–261 (YVNPEGPEGNPDPIAAAIDIRETFGRM). H276 is a binding site for heme.

The protein belongs to the peroxidase family. Peroxidase/catalase subfamily. As to quaternary structure, homodimer or homotetramer. Heme b is required as a cofactor. Post-translationally, formation of the three residue Trp-Tyr-Met cross-link is important for the catalase, but not the peroxidase activity of the enzyme.

The catalysed reaction is H2O2 + AH2 = A + 2 H2O. It catalyses the reaction 2 H2O2 = O2 + 2 H2O. Functionally, bifunctional enzyme with both catalase and broad-spectrum peroxidase activity. This chain is Catalase-peroxidase 2, found in Mycolicibacterium vanbaalenii (strain DSM 7251 / JCM 13017 / BCRC 16820 / KCTC 9966 / NRRL B-24157 / PYR-1) (Mycobacterium vanbaalenii).